The following is a 163-amino-acid chain: Pheromone-binding protein 1 (163 aa).

The signal sequence occupies residues 1-21 (MLGKISLLLLPVFVAINLVHS). Intrachain disulfides connect cysteine 40-cysteine 75, cysteine 71-cysteine 129, and cysteine 118-cysteine 138.

This sequence belongs to the PBP/GOBP family. In terms of tissue distribution, antenna.

This major soluble protein in olfactory sensilla of male moths might serve to solubilize the extremely hydrophobic pheromone molecules and to transport pheromone through the aqueous lymph to receptors located on olfactory cilia. The protein is Pheromone-binding protein 1 of Antheraea pernyi (Chinese oak silk moth).